A 481-amino-acid polypeptide reads, in one-letter code: Proline--tRNA ligase (481 aa).

The protein belongs to the class-II aminoacyl-tRNA synthetase family. ProS type 3 subfamily. In terms of assembly, homodimer.

The protein localises to the cytoplasm. The catalysed reaction is tRNA(Pro) + L-proline + ATP = L-prolyl-tRNA(Pro) + AMP + diphosphate. In terms of biological role, catalyzes the attachment of proline to tRNA(Pro) in a two-step reaction: proline is first activated by ATP to form Pro-AMP and then transferred to the acceptor end of tRNA(Pro). The polypeptide is Proline--tRNA ligase (Chlorobium luteolum (strain DSM 273 / BCRC 81028 / 2530) (Pelodictyon luteolum)).